The chain runs to 160 residues: Regulatory protein RecX (160 aa).

This sequence belongs to the RecX family.

The protein resides in the cytoplasm. Functionally, modulates RecA activity. The protein is Regulatory protein RecX of Pelodictyon phaeoclathratiforme (strain DSM 5477 / BU-1).